The sequence spans 89 residues: Small ribosomal subunit protein uS15 (89 aa).

Belongs to the universal ribosomal protein uS15 family. Part of the 30S ribosomal subunit. Forms a bridge to the 50S subunit in the 70S ribosome, contacting the 23S rRNA.

Its function is as follows. One of the primary rRNA binding proteins, it binds directly to 16S rRNA where it helps nucleate assembly of the platform of the 30S subunit by binding and bridging several RNA helices of the 16S rRNA. Functionally, forms an intersubunit bridge (bridge B4) with the 23S rRNA of the 50S subunit in the ribosome. The polypeptide is Small ribosomal subunit protein uS15 (Aeromonas hydrophila subsp. hydrophila (strain ATCC 7966 / DSM 30187 / BCRC 13018 / CCUG 14551 / JCM 1027 / KCTC 2358 / NCIMB 9240 / NCTC 8049)).